A 512-amino-acid polypeptide reads, in one-letter code: Retinaldehyde dehydrogenase 3 (512 aa).

Residues 1-22 are disordered; it reads MATTNGAVENGQPDGKPPALPR. N-acetylalanine is present on Ala-2. NAD(+)-binding positions include Lys-204, Glu-207, and 257-262; that span reads GSTEVG. Glu-280 serves as the catalytic Proton acceptor. Cys-314 serves as the catalytic Nucleophile. Residues Gln-361 and Glu-411 each coordinate NAD(+).

The protein belongs to the aldehyde dehydrogenase family. As to quaternary structure, homotetramer. Detected in embryonic head (at protein level). Ventral retina.

The protein resides in the cytoplasm. The catalysed reaction is retinal + NAD(+) + H2O = retinoate + NADH + 2 H(+). The enzyme catalyses all-trans-retinal + NAD(+) + H2O = all-trans-retinoate + NADH + 2 H(+). It carries out the reaction all-trans-13,14-dihydroretinal + NAD(+) + H2O = all-trans-13,14-dihydroretinoate + NADH + 2 H(+). Its pathway is cofactor metabolism; retinol metabolism. Functionally, catalyzes the NAD-dependent oxidation of aldehyde substrates, such as all-trans-retinal and all-trans-13,14-dihydroretinal, to their corresponding carboxylic acids, all-trans-retinoate and all-trans-13,14-dihydroretinoate, respectively. High specificity for all-trans-retinal as substrate, can also accept acetaldehyde as substrate in vitro but with lower affinity. Required for the biosynthesis of normal levels of retinoate in the embryonic ocular and nasal regions; a critical lipid in the embryonic development of the eye and the nasal region. In Mus musculus (Mouse), this protein is Retinaldehyde dehydrogenase 3 (Aldh1a3).